The primary structure comprises 557 residues: Aerobic glycerol-3-phosphate dehydrogenase (557 aa).

21-49 contacts FAD; that stretch reads DVVIIGGGITGAGIALDASERGMKVALVE.

Belongs to the FAD-dependent glycerol-3-phosphate dehydrogenase family. It depends on FAD as a cofactor.

Its subcellular location is the cytoplasm. The catalysed reaction is a quinone + sn-glycerol 3-phosphate = dihydroxyacetone phosphate + a quinol. The protein operates within polyol metabolism; glycerol degradation via glycerol kinase pathway; glycerone phosphate from sn-glycerol 3-phosphate (aerobic route): step 1/1. This chain is Aerobic glycerol-3-phosphate dehydrogenase (glpD), found in Staphylococcus saprophyticus subsp. saprophyticus (strain ATCC 15305 / DSM 20229 / NCIMB 8711 / NCTC 7292 / S-41).